We begin with the raw amino-acid sequence, 440 residues long: 2-phosphinomethylmalate synthase (440 aa).

The region spanning 39–313 is the Pyruvate carboxyltransferase domain; sequence VWLSETTHRD…GARVNLPAVN (275 aa).

Belongs to the alpha-IPM synthase/homocitrate synthase family. As to quaternary structure, homodimer. Mn(2+) is required as a cofactor. It depends on Co(2+) as a cofactor.

It carries out the reaction 3-(hydrohydroxyphosphoryl)pyruvate + acetyl-CoA + H2O = phosphinomethylmalate + CoA + H(+). It participates in secondary metabolite biosynthesis; bialaphos biosynthesis. Strongly inhibited by p-chloromercuribenzoate (pCMB), iodoacetamide (IA) and EDTA. Involved in the biosynthesis of phosphinothricin tripeptide (PTT), also known as bialaphos (BA), a natural-product antibiotic and potent herbicide. Catalyzes the condensation berween phosphinopyruvic acid (PPA), an analog of oxalacetic acid, and acetyl-CoA to form R-2-phosphinomethylmalic acid (PMM). Can also act on oxaloacetate, but shows no activity when acetyl-CoA is substituted by propionyl-CoA or butyryl-CoA. The sequence is that of 2-phosphinomethylmalate synthase from Streptomyces hygroscopicus.